The chain runs to 233 residues: Aspartate/glutamate leucyltransferase (233 aa).

It belongs to the R-transferase family. Bpt subfamily.

Its subcellular location is the cytoplasm. The enzyme catalyses N-terminal L-glutamyl-[protein] + L-leucyl-tRNA(Leu) = N-terminal L-leucyl-L-glutamyl-[protein] + tRNA(Leu) + H(+). The catalysed reaction is N-terminal L-aspartyl-[protein] + L-leucyl-tRNA(Leu) = N-terminal L-leucyl-L-aspartyl-[protein] + tRNA(Leu) + H(+). In terms of biological role, functions in the N-end rule pathway of protein degradation where it conjugates Leu from its aminoacyl-tRNA to the N-termini of proteins containing an N-terminal aspartate or glutamate. The protein is Aspartate/glutamate leucyltransferase of Vibrio campbellii (strain ATCC BAA-1116).